The chain runs to 549 residues: Dihydroxy-acid dehydratase (549 aa).

Mg(2+) is bound at residue Asp78. Cys119 contributes to the [2Fe-2S] cluster binding site. Mg(2+)-binding residues include Asp120 and Lys121. Lys121 is subject to N6-carboxylysine. Cys191 contacts [2Fe-2S] cluster. Glu441 contributes to the Mg(2+) binding site. Ser466 serves as the catalytic Proton acceptor.

This sequence belongs to the IlvD/Edd family. Homodimer. Requires [2Fe-2S] cluster as cofactor. The cofactor is Mg(2+).

It carries out the reaction (2R)-2,3-dihydroxy-3-methylbutanoate = 3-methyl-2-oxobutanoate + H2O. It catalyses the reaction (2R,3R)-2,3-dihydroxy-3-methylpentanoate = (S)-3-methyl-2-oxopentanoate + H2O. It participates in amino-acid biosynthesis; L-isoleucine biosynthesis; L-isoleucine from 2-oxobutanoate: step 3/4. Its pathway is amino-acid biosynthesis; L-valine biosynthesis; L-valine from pyruvate: step 3/4. Its function is as follows. Functions in the biosynthesis of branched-chain amino acids. Catalyzes the dehydration of (2R,3R)-2,3-dihydroxy-3-methylpentanoate (2,3-dihydroxy-3-methylvalerate) into 2-oxo-3-methylpentanoate (2-oxo-3-methylvalerate) and of (2R)-2,3-dihydroxy-3-methylbutanoate (2,3-dihydroxyisovalerate) into 2-oxo-3-methylbutanoate (2-oxoisovalerate), the penultimate precursor to L-isoleucine and L-valine, respectively. The protein is Dihydroxy-acid dehydratase of Methanobrevibacter smithii (strain ATCC 35061 / DSM 861 / OCM 144 / PS).